The chain runs to 336 residues: UDP-N-acetylglucosamine--N-acetylmuramyl-(pentapeptide) pyrophosphoryl-undecaprenol N-acetylglucosamine transferase (336 aa).

Residues 10-12, N124, R157, S179, and Q277 each bind UDP-N-acetyl-alpha-D-glucosamine; that span reads TGG.

Belongs to the glycosyltransferase 28 family. MurG subfamily.

It localises to the cell inner membrane. It catalyses the reaction di-trans,octa-cis-undecaprenyl diphospho-N-acetyl-alpha-D-muramoyl-L-alanyl-D-glutamyl-meso-2,6-diaminopimeloyl-D-alanyl-D-alanine + UDP-N-acetyl-alpha-D-glucosamine = di-trans,octa-cis-undecaprenyl diphospho-[N-acetyl-alpha-D-glucosaminyl-(1-&gt;4)]-N-acetyl-alpha-D-muramoyl-L-alanyl-D-glutamyl-meso-2,6-diaminopimeloyl-D-alanyl-D-alanine + UDP + H(+). The protein operates within cell wall biogenesis; peptidoglycan biosynthesis. Functionally, cell wall formation. Catalyzes the transfer of a GlcNAc subunit on undecaprenyl-pyrophosphoryl-MurNAc-pentapeptide (lipid intermediate I) to form undecaprenyl-pyrophosphoryl-MurNAc-(pentapeptide)GlcNAc (lipid intermediate II). The protein is UDP-N-acetylglucosamine--N-acetylmuramyl-(pentapeptide) pyrophosphoryl-undecaprenol N-acetylglucosamine transferase of Wolinella succinogenes (strain ATCC 29543 / DSM 1740 / CCUG 13145 / JCM 31913 / LMG 7466 / NCTC 11488 / FDC 602W) (Vibrio succinogenes).